We begin with the raw amino-acid sequence, 432 residues long: Glutamate-1-semialdehyde 2,1-aminomutase 2 (432 aa).

K268 carries the N6-(pyridoxal phosphate)lysine modification.

This sequence belongs to the class-III pyridoxal-phosphate-dependent aminotransferase family. HemL subfamily. In terms of assembly, homodimer. The cofactor is pyridoxal 5'-phosphate.

The protein localises to the cytoplasm. The catalysed reaction is (S)-4-amino-5-oxopentanoate = 5-aminolevulinate. Its pathway is porphyrin-containing compound metabolism; protoporphyrin-IX biosynthesis; 5-aminolevulinate from L-glutamyl-tRNA(Glu): step 2/2. In Listeria welshimeri serovar 6b (strain ATCC 35897 / DSM 20650 / CCUG 15529 / CIP 8149 / NCTC 11857 / SLCC 5334 / V8), this protein is Glutamate-1-semialdehyde 2,1-aminomutase 2.